Here is a 545-residue protein sequence, read N- to C-terminus: Calcium-binding mitochondrial carrier SAL1 (545 aa).

The region spanning 11-46 (QRDIRYACLFKELDVKGNGQVTLDNLISAFEKNDHP) is the EF-hand 1 domain. The Ca(2+) site is built by lysine 65, aspartate 70, aspartate 93, aspartate 95, aspartate 97, lysine 99, and glutamate 104. EF-hand domains lie at 80-115 (NAESQIWNGFQRIDLDHDGKIGINEINRYLSDLDNQ), 120-155 (NELNHELSNEKMNKFSRFFEWAFPKRKANIALRGQA), and 156-191 (SHKKNTDNDRSKKTTDSDLYVTYDQWRDFLLLVPRK). The Ca(2+) site is built by threonine 161 and serine 166. Solcar repeat units follow at residues 225–332 (IRGF…TKKI), 345–434 (LSKF…LKKW), and 452–541 (LSNL…LKKF). Helical transmembrane passes span 231-248 (FIAGGISGVISRTCTAPF), 307-326 (GNGLNVIKVFPESSIKFGSF), 355-368 (GLAGMAAQFSVYPI), 409-428 (GVTVGIVGIFPYAALDLGTF), 458-475 (LPMGAFSGTVGASVVYPI), and 516-535 (GLVPTLAKVCPAVSISYLCY).

The protein belongs to the mitochondrial carrier (TC 2.A.29) family.

The protein localises to the mitochondrion inner membrane. In terms of biological role, calcium-dependent mitochondrial solute carrier. This chain is Calcium-binding mitochondrial carrier SAL1 (SAL1), found in Saccharomyces cerevisiae (Baker's yeast).